The chain runs to 157 residues: 6,7-dimethyl-8-ribityllumazine synthase (157 aa).

5-amino-6-(D-ribitylamino)uracil is bound by residues Phe22, 56 to 58 (AFE), and 81 to 83 (VLI). 86-87 (ET) serves as a coordination point for (2S)-2-hydroxy-3-oxobutyl phosphate. His89 acts as the Proton donor in catalysis. Phe114 is a 5-amino-6-(D-ribitylamino)uracil binding site. Arg128 contacts (2S)-2-hydroxy-3-oxobutyl phosphate.

It belongs to the DMRL synthase family.

The catalysed reaction is (2S)-2-hydroxy-3-oxobutyl phosphate + 5-amino-6-(D-ribitylamino)uracil = 6,7-dimethyl-8-(1-D-ribityl)lumazine + phosphate + 2 H2O + H(+). The protein operates within cofactor biosynthesis; riboflavin biosynthesis; riboflavin from 2-hydroxy-3-oxobutyl phosphate and 5-amino-6-(D-ribitylamino)uracil: step 1/2. Catalyzes the formation of 6,7-dimethyl-8-ribityllumazine by condensation of 5-amino-6-(D-ribitylamino)uracil with 3,4-dihydroxy-2-butanone 4-phosphate. This is the penultimate step in the biosynthesis of riboflavin. The protein is 6,7-dimethyl-8-ribityllumazine synthase of Chlamydia trachomatis serovar L2 (strain ATCC VR-902B / DSM 19102 / 434/Bu).